The primary structure comprises 1293 residues: Late blight resistance protein R1-A (1293 aa).

Coiled coils occupy residues 423–446 (RYSDSLDFLKNQLQVIQTEFESLQ) and 538–560 (PRMNEEIVGFEDVIENLRKKLLN). Residues 539-826 (RMNEEIVGFE…SEAFIKSSEG (288 aa)) form the NB-ARC domain. Residue 572 to 579 (GMPGLGKT) coordinates ATP. 9 LRR repeats span residues 876-899 (AEENFLLWINRDQITKPSSCVYSH), 956-981 (FKFLKVLDLEHRVFIDFIPTELVYLK), 1027-1049 (MVKLRHLYIPDFSTRIEAALLEN), 1056-1079 (LETLSTLYFSRVEDAELMLRKTPN), 1102-1125 (PIRLEILKLYRSKFKTIPFCISAP), 1149-1172 (LKHLEVLILYKVEFGDHREWKVSN), 1175-1197 (FPQLKILKLEYLSLVKWIVADDA), 1198-1222 (FPNLEQLVLRGCQDLMEIPSCFMDI), and 1235-1259 (ESVVKSALNIQETQVEDYQNTNFKL).

The protein belongs to the disease resistance NB-LRR family.

It localises to the cytoplasm. Its subcellular location is the membrane. Its function is as follows. Confers resistance to late blight (Phytophthora infestans) races carrying the avirulence gene Avr1. Resistance proteins guard the plant against pathogens that contain an appropriate avirulence protein via an indirect interaction with this avirulence protein. That triggers a defense system including the hypersensitive response, which restricts the pathogen growth. This Solanum demissum (Wild potato) protein is Late blight resistance protein R1-A (R1A).